The following is a 282-amino-acid chain: MTKILYGNEVALKIKEDLNLRIDKLKEKNIIPKLAILRMGNKPDDIAYERSIIKSCEKLNIETKVEELSEDILEEDFLKLMESLNNEKEIHGILVFRPYPKHLNENTINSSIALNKDVDCMHPLNLERIFEGDLNGFMPCTPEAVIEILKYYDIDLKGKNIVIINRSMVVGKPLSMMLLSHNATVTICHSKTIDLPSITKKADIVVTAIGKAKLIKEEYFNEDSIVMDVSINVDENGKLCGDVDFENVKEKVGAITPVPKGVGSVTTTLLLKHIVDAAERNS.

NADP(+) contacts are provided by residues 165–167, serine 190, and isoleucine 231; that span reads NRS.

It belongs to the tetrahydrofolate dehydrogenase/cyclohydrolase family. Homodimer.

The enzyme catalyses (6R)-5,10-methylene-5,6,7,8-tetrahydrofolate + NADP(+) = (6R)-5,10-methenyltetrahydrofolate + NADPH. The catalysed reaction is (6R)-5,10-methenyltetrahydrofolate + H2O = (6R)-10-formyltetrahydrofolate + H(+). The protein operates within one-carbon metabolism; tetrahydrofolate interconversion. In terms of biological role, catalyzes the oxidation of 5,10-methylenetetrahydrofolate to 5,10-methenyltetrahydrofolate and then the hydrolysis of 5,10-methenyltetrahydrofolate to 10-formyltetrahydrofolate. The protein is Bifunctional protein FolD of Clostridium botulinum (strain Langeland / NCTC 10281 / Type F).